Consider the following 242-residue polypeptide: Transcriptional regulatory protein btr (242 aa).

One can recognise an HTH crp-type domain in the interval 158-231 (MRSEQRLAAF…QREVRLIDLP (74 aa)). The segment at residues 191–210 (REEIGNYLGLTLETVSRLFS) is a DNA-binding region (H-T-H motif).

In terms of biological role, may regulate gene expression in response to changes in oxygen levels or to changes in the redox potential of the bacterial environment. In Bordetella pertussis (strain Tohama I / ATCC BAA-589 / NCTC 13251), this protein is Transcriptional regulatory protein btr (btr).